Consider the following 158-residue polypeptide: MAGTPQPRALGPDALDVSTDDLAGLLAGNTGRIKTVITDQKVIAGIGNAYSDEILHVAKISPFATAGKLSGAQLTCLHEAMASVLSDAVRRSVGQGAAMLKGEKRSGLRVHARTGLPCPVCGDTVREVSFADKSFQYCPTCQTGGKALADRRMSRLLK.

The FPG-type zinc finger occupies 109–143 (RVHARTGLPCPVCGDTVREVSFADKSFQYCPTCQT).

This is an uncharacterized protein from Mycobacterium tuberculosis (strain ATCC 25618 / H37Rv).